The primary structure comprises 136 residues: Ribosome-binding factor A (136 aa).

It belongs to the RbfA family. In terms of assembly, monomer. Binds 30S ribosomal subunits, but not 50S ribosomal subunits or 70S ribosomes.

The protein resides in the cytoplasm. Functionally, one of several proteins that assist in the late maturation steps of the functional core of the 30S ribosomal subunit. Associates with free 30S ribosomal subunits (but not with 30S subunits that are part of 70S ribosomes or polysomes). Required for efficient processing of 16S rRNA. May interact with the 5'-terminal helix region of 16S rRNA. This chain is Ribosome-binding factor A, found in Serratia proteamaculans (strain 568).